The primary structure comprises 338 residues: Ketol-acid reductoisomerase (NADP(+)) (338 aa).

In terms of domain architecture, KARI N-terminal Rossmann spans 1 to 181; that stretch reads MKVFYDKDAD…GGGRAGIIET (181 aa). Residues 24–27, arginine 47, and serine 52 contribute to the NADP(+) site; that span reads YGSQ. Residue histidine 107 is part of the active site. Glycine 133 contacts NADP(+). The 146-residue stretch at 182 to 327 folds into the KARI C-terminal knotted domain; it reads NFREETETDL…EKLRAMMPWI (146 aa). Mg(2+) contacts are provided by aspartate 190, glutamate 194, glutamate 226, and glutamate 230. Serine 251 provides a ligand contact to substrate.

The protein belongs to the ketol-acid reductoisomerase family. Mg(2+) serves as cofactor.

The enzyme catalyses (2R)-2,3-dihydroxy-3-methylbutanoate + NADP(+) = (2S)-2-acetolactate + NADPH + H(+). It carries out the reaction (2R,3R)-2,3-dihydroxy-3-methylpentanoate + NADP(+) = (S)-2-ethyl-2-hydroxy-3-oxobutanoate + NADPH + H(+). It participates in amino-acid biosynthesis; L-isoleucine biosynthesis; L-isoleucine from 2-oxobutanoate: step 2/4. The protein operates within amino-acid biosynthesis; L-valine biosynthesis; L-valine from pyruvate: step 2/4. Involved in the biosynthesis of branched-chain amino acids (BCAA). Catalyzes an alkyl-migration followed by a ketol-acid reduction of (S)-2-acetolactate (S2AL) to yield (R)-2,3-dihydroxy-isovalerate. In the isomerase reaction, S2AL is rearranged via a Mg-dependent methyl migration to produce 3-hydroxy-3-methyl-2-ketobutyrate (HMKB). In the reductase reaction, this 2-ketoacid undergoes a metal-dependent reduction by NADPH to yield (R)-2,3-dihydroxy-isovalerate. The sequence is that of Ketol-acid reductoisomerase (NADP(+)) from Cupriavidus taiwanensis (strain DSM 17343 / BCRC 17206 / CCUG 44338 / CIP 107171 / LMG 19424 / R1) (Ralstonia taiwanensis (strain LMG 19424)).